We begin with the raw amino-acid sequence, 664 residues long: L-glutamate oxidase precursor (664 aa).

The segment at residues 1 to 44 (MTEDHAVVRSDGGLSRRSFAAVAGTATVATALTSGVAAALPAPA) is a signal peptide (tat-type signal). Residues A105, E124, A125, R133, M161, R162, D638, W646, and I647 each contribute to the FAD site.

This sequence belongs to the flavin monoamine oxidase family. LGOX subfamily. In terms of assembly, the mature enzyme is a heterohexamer composed of 2 alpha chains, 2 beta chains and 2 gamma chains (alpha2beta2gamma2). Requires FAD as cofactor. Predicted to be exported by the Tat system. The position of the signal peptide cleavage has not been experimentally proven. Post-translationally, the precursor form is proteolytically cleaved by an endopeptidase into alpha, beta and gamma chains, which form the stable mature enzyme.

It is found in the secreted. The catalysed reaction is L-glutamate + O2 + H2O = H2O2 + 2-oxoglutarate + NH4(+). With respect to regulation, activity is stimulated in the presence of Mn(2+), Ca(2+) or Mg(2+). In terms of biological role, catalyzes the oxidative deamination of L-glutamate to 2-ketoglutarate along with the production of ammonia and hydrogen peroxide. This is L-glutamate oxidase precursor from Streptomyces viridosporus (strain ATCC 14672 / DSM 40746 / JCM 4963 / KCTC 9882 / NRRL B-12104 / FH 1290) (Streptomyces ghanaensis).